A 294-amino-acid polypeptide reads, in one-letter code: ADKIFEETKKIINAFIQRITYVEFLPEILNAETLKNNELNEGIYGYEEFTDPRISNVFSTAAFQFIHSLTPSSIEFDGTETPLMDLFNNQNFLFLDTEKVAVYMMSSAGEPMDRFFSKQLTDHYFQSGNISFDLVAQIIQRGRDHGLPSYNTFRRHCGLPRLPHFYAMEAANVLKAVYHNIDDVDVFVGGMVEIPLPGSLLGPTFSCLIARQFRDTKFGDSHWYESADPKKGFNEGQLKSIKAMSAAKILCDGFGLSLIPENPFRVTSPSNPMVVCADLPGLDFQPWFLLGNQI.

Asn129 carries an N-linked (GlcNAc...) asparagine glycan.

It belongs to the peroxidase family. As to expression, component of the acid-insoluble and acid-soluble organic matrix of calcified layers of the shell (at protein level).

The protein localises to the secreted. This is Peroxidase-like protein 3 from Lottia gigantea (Giant owl limpet).